The sequence spans 572 residues: Urease subunit alpha (572 aa).

In terms of domain architecture, Urease spans glycine 136–phenylalanine 572. Positions 141, 143, and 224 each coordinate Ni(2+). Lysine 224 is modified (N6-carboxylysine). Histidine 226 serves as a coordination point for substrate. Ni(2+) is bound by residues histidine 253 and histidine 279. The active-site Proton donor is the histidine 327. Aspartate 367 is a binding site for Ni(2+).

Belongs to the metallo-dependent hydrolases superfamily. Urease alpha subunit family. As to quaternary structure, heterotrimer of UreA (gamma), UreB (beta) and UreC (alpha) subunits. Three heterotrimers associate to form the active enzyme. Ni cation serves as cofactor. Carboxylation allows a single lysine to coordinate two nickel ions.

The protein localises to the cytoplasm. It carries out the reaction urea + 2 H2O + H(+) = hydrogencarbonate + 2 NH4(+). The protein operates within nitrogen metabolism; urea degradation; CO(2) and NH(3) from urea (urease route): step 1/1. This chain is Urease subunit alpha, found in Haemophilus influenzae (strain ATCC 51907 / DSM 11121 / KW20 / Rd).